Consider the following 311-residue polypeptide: MKLRIGTRRSQLALDQTNWVVEQLKTHYPDIEIEIKKIETKGDQLLNVSLSKVGGKGLFLKEIQNALLQGEIDLAVHSMKDIPTETTEDLEICAITKRVDPLDALISNNDITIDELPENAKIGTSSLRRGSQLKAYRNDLQIIPIRGNINTRMNKLQELPELDAVVLAKAGLVRSGMTDSISQNISPEIIVPCPGQGALGLEIRHDNENLKEKLAVLDDSESRKAIGAERAFLNRLGGSCHVPVGAYAEIISNELHLTGVVASEDGQDVIKRSVQTHLSDNNKIPSTLGNDLAEELIELGANKILSELKEG.

Position 240 is an S-(dipyrrolylmethanemethyl)cysteine (C240).

This sequence belongs to the HMBS family. Monomer. The cofactor is dipyrromethane.

The catalysed reaction is 4 porphobilinogen + H2O = hydroxymethylbilane + 4 NH4(+). It functions in the pathway porphyrin-containing compound metabolism; protoporphyrin-IX biosynthesis; coproporphyrinogen-III from 5-aminolevulinate: step 2/4. Tetrapolymerization of the monopyrrole PBG into the hydroxymethylbilane pre-uroporphyrinogen in several discrete steps. This is Porphobilinogen deaminase from Natranaerobius thermophilus (strain ATCC BAA-1301 / DSM 18059 / JW/NM-WN-LF).